Consider the following 45-residue polypeptide: Photosystem II reaction center protein K (45 aa).

Residues 1–8 (MLMSLFLA) constitute a propeptide that is removed on maturation. Residues 23–43 (ILPIIPLFFLLLAFVWQAAIG) traverse the membrane as a helical segment.

Belongs to the PsbK family. As to quaternary structure, PSII is composed of 1 copy each of membrane proteins PsbA, PsbB, PsbC, PsbD, PsbE, PsbF, PsbH, PsbI, PsbJ, PsbK, PsbL, PsbM, PsbT, PsbX, PsbY, PsbZ, Psb30/Ycf12, at least 3 peripheral proteins of the oxygen-evolving complex and a large number of cofactors. It forms dimeric complexes.

Its subcellular location is the plastid. It localises to the cyanelle thylakoid membrane. One of the components of the core complex of photosystem II (PSII). PSII is a light-driven water:plastoquinone oxidoreductase that uses light energy to abstract electrons from H(2)O, generating O(2) and a proton gradient subsequently used for ATP formation. It consists of a core antenna complex that captures photons, and an electron transfer chain that converts photonic excitation into a charge separation. This is Photosystem II reaction center protein K from Cyanophora paradoxa.